We begin with the raw amino-acid sequence, 251 residues long: Ubiquinone/menaquinone biosynthesis C-methyltransferase UbiE (251 aa).

S-adenosyl-L-methionine contacts are provided by residues Thr74, Asp95, and 123-124 (NA).

This sequence belongs to the class I-like SAM-binding methyltransferase superfamily. MenG/UbiE family.

The catalysed reaction is a 2-demethylmenaquinol + S-adenosyl-L-methionine = a menaquinol + S-adenosyl-L-homocysteine + H(+). It catalyses the reaction a 2-methoxy-6-(all-trans-polyprenyl)benzene-1,4-diol + S-adenosyl-L-methionine = a 5-methoxy-2-methyl-3-(all-trans-polyprenyl)benzene-1,4-diol + S-adenosyl-L-homocysteine + H(+). It participates in quinol/quinone metabolism; menaquinone biosynthesis; menaquinol from 1,4-dihydroxy-2-naphthoate: step 2/2. It functions in the pathway cofactor biosynthesis; ubiquinone biosynthesis. Its function is as follows. Methyltransferase required for the conversion of demethylmenaquinol (DMKH2) to menaquinol (MKH2) and the conversion of 2-polyprenyl-6-methoxy-1,4-benzoquinol (DDMQH2) to 2-polyprenyl-3-methyl-6-methoxy-1,4-benzoquinol (DMQH2). This chain is Ubiquinone/menaquinone biosynthesis C-methyltransferase UbiE, found in Shewanella sediminis (strain HAW-EB3).